The sequence spans 235 residues: Maximins-S type A (235 aa).

An N-terminal signal peptide occupies residues 1–18; sequence MNFNYFILVLFFITSGHA. Propeptides lie at residues 19-35 and 52-65; these read KSET…HIKR and SAEE…LVKR. Asparagine 83 bears the Asparagine amide mark. The propeptide occupies 87 to 100; the sequence is SAEEQDLAEDLVTR. Residue asparagine 118 is modified to Asparagine amide. Positions 122–135 are excised as a propeptide; the sequence is SAEEQDLAEDLVKR. At asparagine 153 the chain carries Asparagine amide. The propeptide occupies 157–170; sequence SAEEQDLAEDLVTR. Residue lysine 188 is modified to Lysine amide. The propeptide occupies 192-205; sequence SAEDQDLAEDLVTR. At lysine 223 the chain carries Lysine amide. Positions 227 to 235 are excised as a propeptide; the sequence is SAEQEKDMK.

Belongs to the maximin-S family. Expressed by the skin dorsal glands.

It localises to the secreted. Maximin-S1 has no antimicrobial activity. Has no hemolytic activity. In terms of biological role, maximin-S2 has an activity against mycoplasma but has no activity against common Gram-positive and Gram-negative bacteria nor fungi. Has no hemolytic activity. Functionally, maximin-S3 has an activity against mycoplasma but has no activity against common Gram-positive and Gram-negative bacteria nor fungi. Has no hemolytic activity. Its function is as follows. Maximin-S4 has an activity against mycoplasma but has no activity against common Gram-positive and Gram-negative bacteria nor fungi. Has no hemolytic activity. Maximin-S5 has an activity against mycoplasma but has no activity against common Gram-positive and Gram-negative bacteria nor fungi. Has no hemolytic activity. This is Maximins-S type A from Bombina maxima (Giant fire-bellied toad).